Here is a 286-residue protein sequence, read N- to C-terminus: tRNA pseudouridine synthase B (286 aa).

The active-site Nucleophile is the Asp-40.

This sequence belongs to the pseudouridine synthase TruB family. Type 1 subfamily.

The catalysed reaction is uridine(55) in tRNA = pseudouridine(55) in tRNA. Functionally, responsible for synthesis of pseudouridine from uracil-55 in the psi GC loop of transfer RNAs. The chain is tRNA pseudouridine synthase B from Mesoplasma florum (strain ATCC 33453 / NBRC 100688 / NCTC 11704 / L1) (Acholeplasma florum).